Consider the following 581-residue polypeptide: FAD-dependent monooxygenase DEP4 (581 aa).

43-46 (VWSK) lines the FAD pocket. 54–56 (FAQ) lines the NADP(+) pocket. Val-108 is an FAD binding site. NADP(+) is bound by residues 183–202 (VGRS…EGKR), 219–220 (AP), and 351–352 (DI). Residue Met-470 coordinates FAD.

This sequence belongs to the FAD-binding monooxygenase family. It depends on FAD as a cofactor.

It participates in polyketide biosynthesis. Functionally, FAD-dependent monooxygenase; part of the gene cluster that mediates the biosynthesis of depudecin, a highly oxidized eleven-carbon linear polyketide that acts as a histone deacetylase (HDAC) inhibitor and makes a small contribution to pathogenesis. The reducing polyketide synthase DEP5 is the central enzyme in depudecin biosynthesis by yielding the backbone polyketide chain. The monooxygenases DEP2 and DEP4, as well as the uncharacterized protein DEP1, then act as tailoring enzymes to modify the intermediate polyketide chain into depudecin. The protein is FAD-dependent monooxygenase DEP4 of Alternaria brassicicola (Dark leaf spot agent).